Consider the following 95-residue polypeptide: Defensin (95 aa).

The first 17 residues, 1 to 17, serve as a signal peptide directing secretion; it reads MKNYVFALLVVTAVAIA. A propeptide spanning residues 18 to 55 is cleaved from the precursor; the sequence is LPNEDKNAPMRVHLLPQKEDESLKLEVTPVKEHHRTRR. Disulfide bonds link C58/C85, C71/C91, and C75/C93.

The protein belongs to the invertebrate defensin family. Type 1 subfamily.

It localises to the secreted. Antibacterial peptide mostly active against Gram-positive bacteria. This is Defensin from Formica aquilonia (Red wood ant).